We begin with the raw amino-acid sequence, 438 residues long: Aflatoxin cluster transcriptional coactivator aflS (438 aa).

One can recognise an HTH iclR-type domain in the interval 65–134 (LALYNQLLAC…PSPGHVAHSV (70 aa)). The segment at residues 95 to 114 (FEDVADIAGVPECRLRRLVR) is a DNA-binding region (H-T-H motif).

As to quaternary structure, interacts with aflR.

Its subcellular location is the nucleus. The protein localises to the endosome. Transcription coactivator involved in regulation of the aflatoxin biosynthesis gene cluster with aflR. The ratio of the expression data between aflS:aflR plays a crucial role in the regulation of aflatoxins production. A high ratio, produced at a range between 17 and 30 degrees Celsius, corresponds with the production profile of aflatoxin G1 biosynthesis. A low ratio, produced over 30 degrees Celsius, is related to aflatoxin B1 biosynthesis. AflJ may act in aflR transport to or from the nucleus, thus controlling the availability of aflR for transcriptional activation of aflatoxin biosynthesis cluster genes. AflJ may also assist in directing endosomes to the cytoplasmic membrane for aflatoxin export. The protein is Aflatoxin cluster transcriptional coactivator aflS of Aspergillus parasiticus (strain ATCC 56775 / NRRL 5862 / SRRC 143 / SU-1).